Here is a 344-residue protein sequence, read N- to C-terminus: Phenylalanine--tRNA ligase alpha subunit (344 aa).

Glu-256 lines the Mg(2+) pocket.

This sequence belongs to the class-II aminoacyl-tRNA synthetase family. Phe-tRNA synthetase alpha subunit type 1 subfamily. As to quaternary structure, tetramer of two alpha and two beta subunits. It depends on Mg(2+) as a cofactor.

The protein resides in the cytoplasm. It catalyses the reaction tRNA(Phe) + L-phenylalanine + ATP = L-phenylalanyl-tRNA(Phe) + AMP + diphosphate + H(+). The sequence is that of Phenylalanine--tRNA ligase alpha subunit from Bacillus pumilus (strain SAFR-032).